The sequence spans 101 residues: Small ribosomal subunit protein uS14A (101 aa).

The segment at 29 to 73 (AIISSPSTPADARAAAQSELNRQPRDASPVRVRNRDAVDGRPRGH) is disordered. Basic and acidic residues predominate over residues 61-70 (RNRDAVDGRP).

It belongs to the universal ribosomal protein uS14 family. Part of the 30S ribosomal subunit. Contacts proteins S3 and S10.

In terms of biological role, binds 16S rRNA, required for the assembly of 30S particles and may also be responsible for determining the conformation of the 16S rRNA at the A site. In Mycolicibacterium gilvum (strain PYR-GCK) (Mycobacterium gilvum (strain PYR-GCK)), this protein is Small ribosomal subunit protein uS14A.